Here is a 255-residue protein sequence, read N- to C-terminus: Small ribosomal subunit protein uS2 (255 aa).

The disordered stretch occupies residues 233-255; it reads DFVAEEAASEESLEELAEIVEGK.

Belongs to the universal ribosomal protein uS2 family.

The chain is Small ribosomal subunit protein uS2 (rpsB) from Lactococcus lactis subsp. lactis (strain IL1403) (Streptococcus lactis).